The sequence spans 152 residues: Ribonuclease H (152 aa).

The RNase H type-1 domain maps to 6-147; it reads KKNRVIAYTD…ADELANKAIA (142 aa). Asp15, Glu53, Asp75, and Asp139 together coordinate Mg(2+).

Belongs to the RNase H family. Monomer. The cofactor is Mg(2+).

The protein localises to the cytoplasm. The enzyme catalyses Endonucleolytic cleavage to 5'-phosphomonoester.. In terms of biological role, endonuclease that specifically degrades the RNA of RNA-DNA hybrids. In Francisella tularensis subsp. tularensis (strain FSC 198), this protein is Ribonuclease H.